The following is a 105-amino-acid chain: Ferredoxin (105 aa).

Residues Cys-8 and Cys-16 each coordinate [3Fe-4S] cluster. Cys-20, Cys-39, Cys-42, and Cys-45 together coordinate [4Fe-4S] cluster. A 4Fe-4S ferredoxin-type domain is found at 30-59 (RSLYIHPDECVDCGACEPVCPVEAIFYEDD). Position 49 (Cys-49) interacts with [3Fe-4S] cluster.

Requires [4Fe-4S] cluster as cofactor. The cofactor is [3Fe-4S] cluster.

Its function is as follows. Ferredoxins are iron-sulfur proteins that transfer electrons in a wide variety of metabolic reactions. Putative electron transport protein for the cytochrome P-450SOY system from the same organism. The sequence is that of Ferredoxin from Streptomyces griseus.